A 609-amino-acid polypeptide reads, in one-letter code: Forkhead box protein O (609 aa).

Disordered regions lie at residues 1 to 89 (MDGF…KNSS) and 181 to 263 (KSVR…SSCG). The residue at position 43 (threonine 43) is a Phosphothreonine; by PKB/AKT1. Residues 62-79 (TKASNQQLASGDPQQAMQ) show a composition bias toward polar residues. A compositionally biased stretch (low complexity) spans 80–89 (NANAAKKNSS). A DNA-binding region (fork-head) is located at residues 94-200 (WGNLSYADLI…ETSRYEKRRG (107 aa)). Phosphoserine; by PKB/AKT1 is present on serine 189. Composition is skewed to polar residues over residues 220–229 (ATPSPSSSVS) and 254–263 (RASSNASSCG). Serine 257 carries the phosphoserine; by PKB/AKT1 modification. Serine 260, serine 261, and serine 266 each carry phosphoserine. 2 disordered regions span residues 321–365 (AASG…QGQG) and 384–411 (RDGL…DSLN). A compositionally biased stretch (pro residues) spans 327–339 (TQPPPPYQPPQQP). Positions 388–397 (SPNSVTTTMS) are enriched in polar residues.

In terms of assembly, interacts with melt.

Its subcellular location is the cytoplasm. It localises to the nucleus. Functionally, transcription factor involved in the regulation of the insulin signaling pathway. Consistently activates both the downstream target Thor\d4EBP and the feedback control target InR. Involved in negative regulation of the cell cycle, modulating cell growth and proliferation. In response to cellular stresses, such as nutrient deprivation or increased levels of reactive oxygen species, foxo is activated and inhibits growth through the action of target genes such as Thor. Foxo activated in the adult fat body can regulate lifespan in adults; an insulin peptide itself may function as one secondary messenger of insulin-regulated aging. Also regulates Lip4, homolog of human acid lipases, thereby acting as a key modulator of lipid metabolism by insulin signaling and integrates insulin responses to glucose and lipid homeostasis. The chain is Forkhead box protein O from Drosophila virilis (Fruit fly).